The chain runs to 477 residues: Kinesin-like protein KIN-1 (477 aa).

The Kinesin motor domain occupies 3-330 (NVTVCVRFRP…VRFGTRTKLI (328 aa)). 86 to 93 (GQTGAGKT) is a binding site for ATP. Residues 402-451 (QDAASQEVSLLTQAVEELKETVEELTDENERLRGELELAQEAAAAAAAAR) adopt a coiled-coil conformation.

The protein belongs to the TRAFAC class myosin-kinesin ATPase superfamily. Kinesin family. KIN-1 subfamily. In terms of tissue distribution, widely expressed. Expressed in young roots and leaves, in mature roots, culm, sheath and leaves, and in panicles at various developmental stages. Strongest expression is detected in panicles. In the panicle, expression is detected in anthers, glumme, lemma and palea. In the spikelet, expression is detected in both microsporocyte and the anther walls.

The protein localises to the cytoplasm. Its function is as follows. Kinesin-like motor protein that exhibits microtubule-stimulated ATPase activity. Plays an essential role in male meiotic chromosomal dynamics, male gametogenesis and anther dehiscence. May play a minor and nonessential role in regulating meiotic spindle formation. The polypeptide is Kinesin-like protein KIN-1 (Oryza sativa subsp. japonica (Rice)).